The sequence spans 132 residues: Large ribosomal subunit protein bL21 (132 aa).

Positions 112 to 132 (AEKPARKPRAKKTNEVTTDGA) are disordered.

It belongs to the bacterial ribosomal protein bL21 family. Part of the 50S ribosomal subunit. Contacts protein L20.

In terms of biological role, this protein binds to 23S rRNA in the presence of protein L20. The polypeptide is Large ribosomal subunit protein bL21 (Dehalococcoides mccartyi (strain ATCC BAA-2266 / KCTC 15142 / 195) (Dehalococcoides ethenogenes (strain 195))).